The primary structure comprises 534 residues: Pentatricopeptide repeat-containing protein At2g20540 (534 aa).

PPR repeat units follow at residues 41–71, 72–106, 108–142, 143–173, 174–208, 209–239, 240–274, 275–305, 306–340, 341–371, and 377–407; these read SSFMVTKMVDFCDKIEDMDYATRLFNQVSNP, NVFLYNSIIRAYTHNSLYCDVIRIYKQLLRKSFEL, DRFTFPFMFKSCASLGSCYLGKQVHGHLCKFGPRF, HVVTENALIDMYMKFDDLVDAHKVFDEMYER, DVISWNSLLSGYARLGQMKKAKGLFHLMLDKTIVS, WTAMISGYTGIGCYVEAMDFFREMQLAGIEP, DEISLISVLPSCAQLGSLELGKWIHLYAERRGFLK, QTGVCNALIEMYSKCGVISQAIQLFGQMEGK, DVISWSTMISGYAYHGNAHGAIETFNEMQRAKVKP, NGITFLGLLSACSHVGMWQEGLRYFDMMRQD, and KIEHYGCLIDVLARAGKLERAVEITKTMPMK. The segment at 412-487 is type E motif; the sequence is IWGSLLSSCR…TPGGSLIEVN (76 aa). A type E(+) motif region spans residues 488-518; the sequence is NIVQEFVSGDNSKPFWTEISIVLQLFTSHQD.

It belongs to the PPR family. PCMP-E subfamily.

In Arabidopsis thaliana (Mouse-ear cress), this protein is Pentatricopeptide repeat-containing protein At2g20540 (PCMP-E78).